Reading from the N-terminus, the 978-residue chain is Probable serine/threonine-protein kinase PLK (978 aa).

Low complexity predominate over residues 19-36; sequence IQIQQQQFKQPQQQPQQK. 2 disordered regions span residues 19-66 and 121-143; these read IQIQ…SSIH and QQQQ…NEPQ. Positions 37–53 are enriched in polar residues; the sequence is SNSCFSDQENYPANIQP. Low complexity predominate over residues 54 to 64; sequence SSSTSSSSSSS. The region spanning 163-416 is the Protein kinase domain; sequence YRQGEFLGKG…LTQILEHDFF (254 aa). Residues 169-177 and lysine 192 contribute to the ATP site; that span reads LGKGGFAKC. Residue aspartate 286 is the Proton acceptor of the active site. Disordered regions lie at residues 463–554 and 601–638; these read GTTS…FANL and ENQQ…TVTT. Composition is skewed to low complexity over residues 473 to 492 and 500 to 549; these read HHYQ…NYQQ and INNM…NINN. 2 coiled-coil regions span residues 497–555 and 592–630; these read KKQI…ANLS and IKQQ…INNN. One can recognise a POLO box 1 domain in the interval 696 to 780; the sequence is YISQYADFTN…IKYFLNHFTN (85 aa). The segment at 798-819 is disordered; it reads NNNNNNNVENVTNNNNNNSNNS. A POLO box 2 domain is found at 826–904; it reads YVKKWIKFDN…IYGTLSNNLY (79 aa). The disordered stretch occupies residues 908 to 978; the sequence is PESSFQQLPQ…SIPQPQLINQ (71 aa). Positions 913-978 are enriched in low complexity; sequence QQLPQQQYQQ…SIPQPQLINQ (66 aa).

This sequence belongs to the protein kinase superfamily. Ser/Thr protein kinase family. CDC5/Polo subfamily.

It carries out the reaction L-seryl-[protein] + ATP = O-phospho-L-seryl-[protein] + ADP + H(+). The catalysed reaction is L-threonyl-[protein] + ATP = O-phospho-L-threonyl-[protein] + ADP + H(+). The protein is Probable serine/threonine-protein kinase PLK (PLK) of Dictyostelium discoideum (Social amoeba).